The sequence spans 261 residues: DNA repair protein RecO (261 aa).

It belongs to the RecO family.

Involved in DNA repair and RecF pathway recombination. This chain is DNA repair protein RecO, found in Pelodictyon phaeoclathratiforme (strain DSM 5477 / BU-1).